The primary structure comprises 279 residues: Large ribosomal subunit protein uL2 (279 aa).

The interval 202–279 (NASIGKAGRS…TSRHKSKKKG (78 aa)) is disordered. Positions 209–220 (GRSRWLGRRPHN) are enriched in basic residues.

This sequence belongs to the universal ribosomal protein uL2 family. Part of the 50S ribosomal subunit. Forms a bridge to the 30S subunit in the 70S ribosome.

In terms of biological role, one of the primary rRNA binding proteins. Required for association of the 30S and 50S subunits to form the 70S ribosome, for tRNA binding and peptide bond formation. It has been suggested to have peptidyltransferase activity; this is somewhat controversial. Makes several contacts with the 16S rRNA in the 70S ribosome. The sequence is that of Large ribosomal subunit protein uL2 from Methylocella silvestris (strain DSM 15510 / CIP 108128 / LMG 27833 / NCIMB 13906 / BL2).